The chain runs to 159 residues: Protein hunchback (159 aa).

The span at 18–34 (HNHHHHHHHGHHQHQQR) shows a compositional bias: basic residues. 2 disordered regions span residues 18-49 (HNHH…QSPL) and 119-159 (LTPP…KYMA). Over residues 140-159 (EPEKEHDLMSNSSEDMKYMA) the composition is skewed to basic and acidic residues.

It belongs to the hunchback C2H2-type zinc-finger protein family.

It is found in the nucleus. Gap class segmentation protein that controls development of head structures. This chain is Protein hunchback (hb), found in Drosophila soonae (Fruit fly).